Reading from the N-terminus, the 215-residue chain is Negative modulator of initiation of replication (215 aa).

The tract at residues 71 to 93 is disordered; that stretch reads AETPKPSSEQEIRTPARKQSTQS. The segment at 181–187 is interaction with DNA; it reads NTNSGRK.

The protein belongs to the SeqA family. As to quaternary structure, homodimer. Polymerizes to form helical filaments.

It localises to the cytoplasm. In terms of biological role, negative regulator of replication initiation, which contributes to regulation of DNA replication and ensures that replication initiation occurs exactly once per chromosome per cell cycle. Binds to pairs of hemimethylated GATC sequences in the oriC region, thus preventing assembly of replication proteins and re-initiation at newly replicated origins. Repression is relieved when the region becomes fully methylated. The protein is Negative modulator of initiation of replication of Mannheimia succiniciproducens (strain KCTC 0769BP / MBEL55E).